An 899-amino-acid chain; its full sequence is Protein translocase subunit SecA (899 aa).

ATP contacts are provided by residues glutamine 87, glycine 105–threonine 109, and aspartate 512. The tract at residues methionine 846 to lysine 899 is disordered. Zn(2+)-binding residues include cysteine 885, cysteine 887, cysteine 896, and cysteine 897.

This sequence belongs to the SecA family. In terms of assembly, monomer and homodimer. Part of the essential Sec protein translocation apparatus which comprises SecA, SecYEG and auxiliary proteins SecDF-YajC and YidC. It depends on Zn(2+) as a cofactor.

The protein resides in the cell inner membrane. The protein localises to the cytoplasm. It catalyses the reaction ATP + H2O + cellular proteinSide 1 = ADP + phosphate + cellular proteinSide 2.. Part of the Sec protein translocase complex. Interacts with the SecYEG preprotein conducting channel. Has a central role in coupling the hydrolysis of ATP to the transfer of proteins into and across the cell membrane, serving as an ATP-driven molecular motor driving the stepwise translocation of polypeptide chains across the membrane. The polypeptide is Protein translocase subunit SecA (Geobacter metallireducens (strain ATCC 53774 / DSM 7210 / GS-15)).